The following is a 484-amino-acid chain: Rho guanine nucleotide exchange factor 35 (484 aa).

A disordered region spans residues 139–418 (FSSDLGSEEE…ALIAPEDSPH (280 aa)). At Ser-184 the chain carries Phosphoserine. Low complexity predominate over residues 217–237 (ESQGLLHPQEVQVLEEQGQQE). The span at 266–278 (NDEKGEQKQKQEQ) shows a compositional bias: basic and acidic residues. Positions 299-309 (GLNDGEWEQED) are enriched in acidic residues. Composition is skewed to basic and acidic residues over residues 323–368 (GEER…KEKG) and 394–404 (RSREEENEHHG).

The chain is Rho guanine nucleotide exchange factor 35 (ARHGEF35) from Homo sapiens (Human).